Reading from the N-terminus, the 524-residue chain is Leucine-rich repeat-containing protein 1 (524 aa).

LRR repeat units follow at residues 11 to 34 (NRHV…IYRY), 35 to 58 (ARSL…FFQL), 60 to 81 (KLRK…IANF), 83 to 105 (QLVE…SFCK), 107 to 126 (LQVA…SFPE), 127 to 149 (LQNL…NIGN), 150 to 172 (LYNL…SLTQ), 173 to 196 (LRRL…IGAL), 198 to 218 (HLKD…EIGN), 219 to 242 (LKNL…ISGL), 244 to 264 (SLTD…GIGK), 265 to 288 (LKKL…VGEC), 290 to 310 (SLTE…SIGK), 311 to 334 (LKKL…IGGC), 336 to 356 (SLTV…EVSQ), 357 to 380 (ATEL…LTAL), and 382 to 405 (LKAL…TDYT). A Phosphothreonine modification is found at Thr-480. A coiled-coil region spans residues 484–512 (GELKHMKKTVENLRNDMNAAKGLDSNKNE).

In terms of assembly, interacts with DLG1 and DLG4. May form a complex with DLG1 and ERBIN, where interaction between LRRC1 and ERBIN is indirect. Expressed strongly in testis and placenta, followed by heart, lung, kidney, thyroid, trachea, colon, prostate and pancreas.

It localises to the cytoplasm. The protein localises to the membrane. This chain is Leucine-rich repeat-containing protein 1 (LRRC1), found in Homo sapiens (Human).